Consider the following 428-residue polypeptide: Adenylosuccinate synthetase (428 aa).

Residues 12 to 18 (GDEGKGK) and 40 to 42 (GHT) each bind GTP. D13 acts as the Proton acceptor in catalysis. Positions 13 and 40 each coordinate Mg(2+). Residues 13–16 (DEGK), 38–41 (NAGH), T129, R143, Q224, T239, and R303 each bind IMP. The active-site Proton donor is H41. 299–305 (VTTGRIR) contributes to the substrate binding site. GTP contacts are provided by residues R305, 331–333 (KVD), and 410–412 (AYG).

The protein belongs to the adenylosuccinate synthetase family. In terms of assembly, homodimer. Mg(2+) serves as cofactor.

The protein resides in the cytoplasm. The catalysed reaction is IMP + L-aspartate + GTP = N(6)-(1,2-dicarboxyethyl)-AMP + GDP + phosphate + 2 H(+). The protein operates within purine metabolism; AMP biosynthesis via de novo pathway; AMP from IMP: step 1/2. Plays an important role in the de novo pathway of purine nucleotide biosynthesis. Catalyzes the first committed step in the biosynthesis of AMP from IMP. The sequence is that of Adenylosuccinate synthetase from Francisella philomiragia subsp. philomiragia (strain ATCC 25017 / CCUG 19701 / FSC 153 / O#319-036).